The following is a 477-amino-acid chain: Bifunctional protein HldE (477 aa).

Residues 1–318 are ribokinase; it reads MKVTLPEFER…ENAVRGRAET (318 aa). 195–198 contacts ATP; sequence NLSE. The active site involves Asp-264. A cytidylyltransferase region spans residues 344 to 477; the sequence is MTNGVFDILH…IKKIQKDSDK (134 aa).

It in the N-terminal section; belongs to the carbohydrate kinase PfkB family. This sequence in the C-terminal section; belongs to the cytidylyltransferase family. As to quaternary structure, homodimer.

It carries out the reaction D-glycero-beta-D-manno-heptose 7-phosphate + ATP = D-glycero-beta-D-manno-heptose 1,7-bisphosphate + ADP + H(+). The catalysed reaction is D-glycero-beta-D-manno-heptose 1-phosphate + ATP + H(+) = ADP-D-glycero-beta-D-manno-heptose + diphosphate. It participates in nucleotide-sugar biosynthesis; ADP-L-glycero-beta-D-manno-heptose biosynthesis; ADP-L-glycero-beta-D-manno-heptose from D-glycero-beta-D-manno-heptose 7-phosphate: step 1/4. It functions in the pathway nucleotide-sugar biosynthesis; ADP-L-glycero-beta-D-manno-heptose biosynthesis; ADP-L-glycero-beta-D-manno-heptose from D-glycero-beta-D-manno-heptose 7-phosphate: step 3/4. Catalyzes the phosphorylation of D-glycero-D-manno-heptose 7-phosphate at the C-1 position to selectively form D-glycero-beta-D-manno-heptose-1,7-bisphosphate. Functionally, catalyzes the ADP transfer from ATP to D-glycero-beta-D-manno-heptose 1-phosphate, yielding ADP-D-glycero-beta-D-manno-heptose. The polypeptide is Bifunctional protein HldE (Klebsiella pneumoniae subsp. pneumoniae (strain ATCC 700721 / MGH 78578)).